A 51-amino-acid polypeptide reads, in one-letter code: UPF0391 membrane protein PsycPRwf_2202 (51 aa).

2 helical membrane-spanning segments follow: residues 6–26 (IIFA…VAGL) and 27–47 (SQNF…IGFI).

Belongs to the UPF0391 family.

Its subcellular location is the cell membrane. In Psychrobacter sp. (strain PRwf-1), this protein is UPF0391 membrane protein PsycPRwf_2202.